A 794-amino-acid chain; its full sequence is Hyaluronan mediated motility receptor (794 aa).

The segment at 1 to 87 is disordered; that stretch reads MSFPKAPLKR…SQKNDKDVKR (87 aa). The residue at position 20 (serine 20) is a Phosphoserine. Over residues 74-87 the composition is skewed to basic and acidic residues; that stretch reads SKKDSQKNDKDVKR. N-linked (GlcNAc...) asparagine glycosylation is found at asparagine 134, asparagine 279, asparagine 446, asparagine 467, asparagine 488, asparagine 509, asparagine 530, asparagine 561, and asparagine 601. The interval 365-630 is required for interaction with FAM83D; it reads EEMTSEKNVF…ITDLKNQLRQ (266 aa). A run of 5 repeats spans residues 442 to 462, 463 to 483, 484 to 504, 505 to 525, and 526 to 546. Residues 442–546 are 5 X 21 AA tandem repeats; it reads QEKYNDTAQS…RDVTAQLESY (105 aa). Hyaluronic acid-binding regions lie at residues 719 to 729 and 741 to 750; these read KQKIKHVVKLK and KLRSQLVKRK. Threonine 784 is subject to Phosphothreonine.

In terms of assembly, interacts with ANKRD26. Interacts with DYNLL1. Interacts with FAM83D/CHICA. Ubiquitously expressed.

It is found in the cell surface. It localises to the cytoplasm. The protein localises to the cytoskeleton. Its subcellular location is the spindle. Receptor for hyaluronic acid (HA). Involved in cell motility. When hyaluronan binds to HMMR, the phosphorylation of a number of proteins, including the PTK2/FAK1 occurs. May also be involved in cellular transformation and metastasis formation, and in regulating extracellular-regulated kinase (ERK) activity. May act as a regulator of adipogenesis. The sequence is that of Hyaluronan mediated motility receptor (Hmmr) from Mus musculus (Mouse).